A 231-amino-acid polypeptide reads, in one-letter code: MKETRPIIALDFAGKEEVQSFLEQFPPDEKLYVKVGMELYYAEGPGIINYLKDCGHSIFLDLKLHDIPNTVESAMKVLAKLGVDMTNVHAAGGVEMMRAARRGLGKDAVLIAVTQLTSTSEEQMRTDQNIQTSLQEAVVHYAQRAQEAGLDGVVCSAHEVALIKDATSSDFVCLTPGIRPTGGEVGDQKRVMTPADAARIGSDYIVVGRPITKSEHPYQTYLSIKEEWNRG.

Residues D11, K34, 61–70 (DLKLHDIPNT), T117, R179, Q188, G208, and R209 contribute to the substrate site. Residue K63 is the Proton donor of the active site.

It belongs to the OMP decarboxylase family. Type 1 subfamily. In terms of assembly, homodimer.

It carries out the reaction orotidine 5'-phosphate + H(+) = UMP + CO2. Its pathway is pyrimidine metabolism; UMP biosynthesis via de novo pathway; UMP from orotate: step 2/2. Functionally, catalyzes the decarboxylation of orotidine 5'-monophosphate (OMP) to uridine 5'-monophosphate (UMP). The sequence is that of Orotidine 5'-phosphate decarboxylase from Streptococcus suis (strain 98HAH33).